The chain runs to 139 residues: Probable cytochrome b5 (139 aa).

Residues 2 to 78 (SAEFTYQDVA…LEPLLVGTLK (77 aa)) enclose the Cytochrome b5 heme-binding domain. Residues His-37 and His-61 each contribute to the heme site. Residues 105-125 (GLGIGLYAVLVLGGLAGFAAY) traverse the membrane as a helical segment.

This sequence belongs to the cytochrome b5 family.

The protein localises to the endoplasmic reticulum membrane. The protein resides in the microsome membrane. In terms of biological role, membrane bound hemoprotein which function as an electron carrier for several membrane bound oxygenases. The sequence is that of Probable cytochrome b5 from Neurospora crassa (strain ATCC 24698 / 74-OR23-1A / CBS 708.71 / DSM 1257 / FGSC 987).